Reading from the N-terminus, the 85-residue chain is Glutaredoxin (85 aa).

Positions 1 to 85 constitute a Glutaredoxin domain; it reads MQTVTMYTGP…EGGLDGLLNP (85 aa). The cysteines at positions 12 and 15 are disulfide-linked.

This sequence belongs to the glutaredoxin family. In terms of assembly, monomer.

Its subcellular location is the cytoplasm. Functionally, has a glutathione-disulfide oxidoreductase activity in the presence of NADPH and glutathione reductase. Reduces low molecular weight disulfides and proteins. In Neisseria meningitidis serogroup A / serotype 4A (strain DSM 15465 / Z2491), this protein is Glutaredoxin (grx).